Consider the following 447-residue polypeptide: Phosphoglucosamine mutase (447 aa).

Ser108 serves as the catalytic Phosphoserine intermediate. Residues Ser108, Asp247, Asp249, and Asp251 each contribute to the Mg(2+) site. Residue Ser108 is modified to Phosphoserine.

This sequence belongs to the phosphohexose mutase family. Requires Mg(2+) as cofactor. In terms of processing, activated by phosphorylation.

The catalysed reaction is alpha-D-glucosamine 1-phosphate = D-glucosamine 6-phosphate. Functionally, catalyzes the conversion of glucosamine-6-phosphate to glucosamine-1-phosphate. The polypeptide is Phosphoglucosamine mutase (Bordetella avium (strain 197N)).